Consider the following 1062-residue polypeptide: Valine--tRNA ligase, mitochondrial (1062 aa).

The N-terminal 15 residues, 1–15 (MPHLPLASFRPPLRG), are a transit peptide targeting the mitochondrion. The disordered stretch occupies residues 1–73 (MPHLPLASFR…AKGKPPAEST (73 aa)). The segment covering 42 to 56 (RNREAKQKRLREKQA) has biased composition (basic and acidic residues). The short motif at 146-156 (PNVTGSLHIGH) is the 'HIGH' region element. A 'KMSKS' region motif is present at residues 659-663 (KMSKS). K662 contributes to the ATP binding site.

Belongs to the class-I aminoacyl-tRNA synthetase family.

The protein resides in the mitochondrion. It carries out the reaction tRNA(Val) + L-valine + ATP = L-valyl-tRNA(Val) + AMP + diphosphate. Its function is as follows. Catalyzes the attachment of valine to tRNA(Val) in a two-step reaction: valine is first activated by ATP to form Val-AMP and then transferred to the acceptor end of tRNA(Val). In Sus scrofa (Pig), this protein is Valine--tRNA ligase, mitochondrial (VARS2).